The primary structure comprises 338 residues: Glyceraldehyde-3-phosphate dehydrogenase (338 aa).

NAD(+) is bound by residues 11 to 12 (TI) and G111. A D-glyceraldehyde 3-phosphate-binding site is contributed by 140–142 (SCN). The active-site Nucleophile is C141. R169 provides a ligand contact to NAD(+). 195-196 (HG) is a binding site for D-glyceraldehyde 3-phosphate. Q302 lines the NAD(+) pocket.

Belongs to the glyceraldehyde-3-phosphate dehydrogenase family. Homotetramer.

Its subcellular location is the cytoplasm. It catalyses the reaction D-glyceraldehyde 3-phosphate + phosphate + NADP(+) = (2R)-3-phospho-glyceroyl phosphate + NADPH + H(+). It carries out the reaction D-glyceraldehyde 3-phosphate + phosphate + NAD(+) = (2R)-3-phospho-glyceroyl phosphate + NADH + H(+). It functions in the pathway carbohydrate degradation; glycolysis; pyruvate from D-glyceraldehyde 3-phosphate: step 1/5. This is Glyceraldehyde-3-phosphate dehydrogenase (gap) from Methanobacterium bryantii.